The chain runs to 296 residues: Elongation factor Ts (296 aa).

The segment at 79–82 (TDFV) is involved in Mg(2+) ion dislocation from EF-Tu.

It belongs to the EF-Ts family.

The protein localises to the cytoplasm. Its function is as follows. Associates with the EF-Tu.GDP complex and induces the exchange of GDP to GTP. It remains bound to the aminoacyl-tRNA.EF-Tu.GTP complex up to the GTP hydrolysis stage on the ribosome. The polypeptide is Elongation factor Ts (tsf) (Spiroplasma citri).